The primary structure comprises 196 residues: tRNA(Phe) 7-((3-amino-3-carboxypropyl)-4-demethylwyosine(37)-N(4))-methyltransferase 1 (196 aa).

The protein belongs to the TYW3 family.

The enzyme catalyses 4-demethyl-7-[(3S)-3-amino-3-carboxypropyl]wyosine(37) in tRNA(Phe) + S-adenosyl-L-methionine = 7-[(3S)-3-amino-3-carboxypropyl]wyosine(37) in tRNA(Phe) + S-adenosyl-L-homocysteine + H(+). Functionally, S-adenosyl-L-methionine-dependent methyltransferase that acts as a component of the wyosine derivatives biosynthesis pathway. Probably methylates N-4 position of wybutosine-86 to produce wybutosine-72. This is tRNA(Phe) 7-((3-amino-3-carboxypropyl)-4-demethylwyosine(37)-N(4))-methyltransferase 1 from Pyrococcus furiosus (strain ATCC 43587 / DSM 3638 / JCM 8422 / Vc1).